The following is a 204-amino-acid chain: AFG2-interacting ribosome maturation factor (204 aa).

Part of the 55LCC heterohexameric ATPase complex. Does not associate with pre-60S ribosomal particles.

It localises to the nucleus. The protein localises to the cytoplasm. In terms of biological role, part of the 55LCC heterohexameric ATPase complex which is chromatin-associated and promotes replisome proteostasis to maintain replication fork progression and genome stability. Required for replication fork progression, sister chromatid cohesion, and chromosome stability. The ATPase activity is specifically enhanced by replication fork DNA and is coupled to cysteine protease-dependent cleavage of replisome substrates in response to replication fork damage. Uses ATPase activity to process replisome substrates in S-phase, facilitating their proteolytic turnover from chromatin to ensure DNA replication and mitotic fidelity. Involved in the cytoplasmic maturation steps of pre-60S ribosomal particles by promoting the release of shuttling protein RSL24D1/RLP24 from the pre-ribosomal particles. This chain is AFG2-interacting ribosome maturation factor (airim), found in Xenopus tropicalis (Western clawed frog).